A 691-amino-acid chain; its full sequence is Glycine--tRNA ligase beta subunit (691 aa).

This sequence belongs to the class-II aminoacyl-tRNA synthetase family. In terms of assembly, tetramer of two alpha and two beta subunits.

Its subcellular location is the cytoplasm. It catalyses the reaction tRNA(Gly) + glycine + ATP = glycyl-tRNA(Gly) + AMP + diphosphate. The polypeptide is Glycine--tRNA ligase beta subunit (Buchnera aphidicola subsp. Schizaphis graminum (strain Sg)).